We begin with the raw amino-acid sequence, 298 residues long: MDKNIIIGAMTALITPFKNGKVDEQSYARLIKRQIENGIDAVVPVGTTGESATLTHEEHRTCIEIAVETCKGTKVKVLAGAGSNATHEAVGLAKFAKEHGADGILSVAPYYNKPTQQGLYEHYKAIAQSVDIPVLLYNVPGRTGCEISTDTIIKLFRDCENIYGVKEASGNIDKCVDLLAHEPRMMLISGEDAINYPILSNGGKGVISVTSNLLPDMISALTHFALDENYKEAKKINDELYNINKILFCESNPIPIKTAMYIAGLIESLEFRLPLCPPSKENFAKIEEVMKKYKIKGF.

Pyruvate is bound at residue threonine 48. The Proton donor/acceptor role is filled by tyrosine 137. Lysine 166 acts as the Schiff-base intermediate with substrate in catalysis. Residue isoleucine 207 participates in pyruvate binding.

It belongs to the DapA family. As to quaternary structure, homotetramer; dimer of dimers.

It is found in the cytoplasm. The catalysed reaction is L-aspartate 4-semialdehyde + pyruvate = (2S,4S)-4-hydroxy-2,3,4,5-tetrahydrodipicolinate + H2O + H(+). It participates in amino-acid biosynthesis; L-lysine biosynthesis via DAP pathway; (S)-tetrahydrodipicolinate from L-aspartate: step 3/4. Functionally, catalyzes the condensation of (S)-aspartate-beta-semialdehyde [(S)-ASA] and pyruvate to 4-hydroxy-tetrahydrodipicolinate (HTPA). The chain is 4-hydroxy-tetrahydrodipicolinate synthase from Campylobacter jejuni subsp. jejuni serotype O:6 (strain 81116 / NCTC 11828).